Here is a 64-residue protein sequence, read N- to C-terminus: Large ribosomal subunit protein bL35 (64 aa).

Belongs to the bacterial ribosomal protein bL35 family.

This Acidothermus cellulolyticus (strain ATCC 43068 / DSM 8971 / 11B) protein is Large ribosomal subunit protein bL35.